A 257-amino-acid polypeptide reads, in one-letter code: 1-acyl-sn-glycerol-3-phosphate acyltransferase (257 aa).

A helical membrane pass occupies residues 10–30 (VLFYLLLSASAFVWGTLSFFI). The HXXXXD motif signature appears at 82–87 (HQSTWE). The helical transmembrane segment at 105-125 (ELLYVPFFGWALALLKPIAID) threads the bilayer.

This sequence belongs to the 1-acyl-sn-glycerol-3-phosphate acyltransferase family.

It localises to the cell inner membrane. It catalyses the reaction a 1-acyl-sn-glycero-3-phosphate + an acyl-CoA = a 1,2-diacyl-sn-glycero-3-phosphate + CoA. The protein operates within phospholipid metabolism; CDP-diacylglycerol biosynthesis; CDP-diacylglycerol from sn-glycerol 3-phosphate: step 2/3. Functionally, converts lysophosphatidic acid (LPA) into phosphatidic acid by incorporating acyl moiety at the 2 position. The sequence is that of 1-acyl-sn-glycerol-3-phosphate acyltransferase from Pseudomonas aeruginosa (strain ATCC 15692 / DSM 22644 / CIP 104116 / JCM 14847 / LMG 12228 / 1C / PRS 101 / PAO1).